The chain runs to 37 residues: Alpha-conotoxin LvIA (37 aa).

Residues 1–20 (FRGRDAAAKASGLVGLTDRR) constitute a propeptide that is removed on maturation. Intrachain disulfides connect C22–C28 and C23–C36. The interval 24 to 26 (SHP) is ser-Xaa-Pro motif, crucial for potent interaction with nAChR. A Cysteine amide modification is found at C36.

Belongs to the conotoxin A superfamily. Expressed by the venom duct.

The protein resides in the secreted. In terms of biological role, alpha-conotoxins act on postsynaptic membranes, they bind to the nicotinic acetylcholine receptors (nAChR) and thus inhibit them. This toxin blocks alpha-3-beta-2/CHRNA3-CHRNB2 nAChR with high selectivity (IC(50)=8.67 nM (on rat) and 17.5 (on human)). Also has weaker activity on alpha-6/alpha-3-beta-2-beta-3 (CHRNA6/CHRNA3-CHRNB2-CHRNB3) (IC(50)=108 nM (on rat)), alpha-6/alpha-3-beta-4 (CHRNA6/CHRNA3-CHRNB4) (IC(50)=121 nM (on rat)), alpha-3-beta-4 (CHRNA3-CHRNB4) (IC(50)=148 nM (on rat)), and alpha-7/CHRNA7 nAChRs (IC(50)=3000 nM (on rat)). When tested on mouse with hot-plate tests, this toxin significantly increases the base pain threshold and shows analgesic effects. This chain is Alpha-conotoxin LvIA, found in Conus lividus (Livid cone).